The primary structure comprises 188 residues: HGPRTase-like protein (188 aa).

It belongs to the purine/pyrimidine phosphoribosyltransferase family. Archaeal HPRT subfamily.

May catalyze a purine salvage reaction, the substrate is unknown. The sequence is that of HGPRTase-like protein from Halobacterium salinarum (strain ATCC 29341 / DSM 671 / R1).